The primary structure comprises 223 residues: Cytidylate kinase (223 aa).

Residue 10–18 (GPASSGKST) coordinates ATP.

The protein belongs to the cytidylate kinase family. Type 1 subfamily.

The protein localises to the cytoplasm. The catalysed reaction is CMP + ATP = CDP + ADP. The enzyme catalyses dCMP + ATP = dCDP + ADP. The protein is Cytidylate kinase of Streptococcus pneumoniae (strain 70585).